The sequence spans 293 residues: 4-hydroxy-tetrahydrodipicolinate synthase (293 aa).

T47 serves as a coordination point for pyruvate. Catalysis depends on Y136, which acts as the Proton donor/acceptor. Residue K164 is the Schiff-base intermediate with substrate of the active site. I206 is a pyruvate binding site.

The protein belongs to the DapA family. Homotetramer; dimer of dimers.

The protein localises to the cytoplasm. It catalyses the reaction L-aspartate 4-semialdehyde + pyruvate = (2S,4S)-4-hydroxy-2,3,4,5-tetrahydrodipicolinate + H2O + H(+). The protein operates within amino-acid biosynthesis; L-lysine biosynthesis via DAP pathway; (S)-tetrahydrodipicolinate from L-aspartate: step 3/4. Functionally, catalyzes the condensation of (S)-aspartate-beta-semialdehyde [(S)-ASA] and pyruvate to 4-hydroxy-tetrahydrodipicolinate (HTPA). This is 4-hydroxy-tetrahydrodipicolinate synthase from Listeria monocytogenes serotype 4b (strain CLIP80459).